A 413-amino-acid polypeptide reads, in one-letter code: Multifunctional CCA protein (413 aa).

ATP-binding residues include Gly-8 and Arg-11. CTP is bound by residues Gly-8 and Arg-11. The Mg(2+) site is built by Glu-21 and Asp-23. The ATP site is built by Arg-91, Arg-137, and Arg-140. CTP-binding residues include Arg-91, Arg-137, and Arg-140. In terms of domain architecture, HD spans 228–329 (CGIHTLMSLR…WRLLQRLDVL (102 aa)).

Belongs to the tRNA nucleotidyltransferase/poly(A) polymerase family. Bacterial CCA-adding enzyme type 1 subfamily. Monomer. Can also form homodimers and oligomers. Requires Mg(2+) as cofactor. Ni(2+) is required as a cofactor.

The catalysed reaction is a tRNA precursor + 2 CTP + ATP = a tRNA with a 3' CCA end + 3 diphosphate. The enzyme catalyses a tRNA with a 3' CCA end + 2 CTP + ATP = a tRNA with a 3' CCACCA end + 3 diphosphate. Its function is as follows. Catalyzes the addition and repair of the essential 3'-terminal CCA sequence in tRNAs without using a nucleic acid template. Adds these three nucleotides in the order of C, C, and A to the tRNA nucleotide-73, using CTP and ATP as substrates and producing inorganic pyrophosphate. tRNA 3'-terminal CCA addition is required both for tRNA processing and repair. Also involved in tRNA surveillance by mediating tandem CCA addition to generate a CCACCA at the 3' terminus of unstable tRNAs. While stable tRNAs receive only 3'-terminal CCA, unstable tRNAs are marked with CCACCA and rapidly degraded. This is Multifunctional CCA protein from Acinetobacter baylyi (strain ATCC 33305 / BD413 / ADP1).